The chain runs to 154 residues: uncharacterized protein (154 aa).

Functionally, this protein may be involved in virus assembly. Essential for virus function. This is an uncharacterized protein from Saccharolobus solfataricus (Sulfolobus solfataricus).